The following is a 308-amino-acid chain: Cap-specific mRNA (nucleoside-2'-O-)-methyltransferase (308 aa).

Y30 lines the mRNA pocket. The S-adenosyl-L-methionine site is built by Q46, Y74, G76, G80, D103, R105, V124, and D147. The segment at 177-257 is binding to NPH-I; that stretch reads PIASSLKWRC…NTKIRPKIVL (81 aa). The active-site For methyltransferase activity is K183. MRNA is bound by residues 185–188, D190, 213–215, and E241; these read RCPF and SAE.

It belongs to the class I-like SAM-binding methyltransferase superfamily. Poxvirus/kinetoplastid 2'-O-MTase family. As to quaternary structure, interacts with poly(A) polymerase catalytic subunit OPG063. Interacts with OPG109 and OPG123; these interactions might help linking transcription to capping and polyadenylation.

It is found in the virion. It carries out the reaction a 5'-end (N(7)-methyl 5'-triphosphoguanosine)-ribonucleoside in mRNA + S-adenosyl-L-methionine = a 5'-end (N(7)-methyl 5'-triphosphoguanosine)-(2'-O-methyl-ribonucleoside) in mRNA + S-adenosyl-L-homocysteine + H(+). Displays methyltransferase, positive regulation of the poly(A) polymerase and transcription elongation activities. Involved in the modification of both mRNA ends and in intermediate and late gene positive transcription elongation. At the mRNAs 5' end, methylates the ribose 2' OH group of the first transcribed nucleotide, thereby producing a 2'-O-methylpurine cap. At the 3' end, functions as a processivity factor which stimulates the activity of the viral poly(A) polymerase OPG063 that creates mRNA's poly(A) tail. In the presence of OPG102, OPG063 does not dissociate from the RNA allowing tail elongation to around 250 adenylates. The polypeptide is Cap-specific mRNA (nucleoside-2'-O-)-methyltransferase (OPG102) (Fowlpox virus (strain NVSL) (FPV)).